The sequence spans 436 residues: 23S rRNA (uracil(1939)-C(5))-methyltransferase RlmD (436 aa).

The TRAM domain maps to 10-68 (KQKTTQKIVAEIQDLDYQGLGVAKIQGKTWFIENALPTEKVEAVVTDEKRQYGLATAQK). Cys-81, Cys-87, Cys-90, and Cys-168 together coordinate [4Fe-4S] cluster. Gln-270, Phe-299, Asn-304, Glu-320, Asp-347, and Asp-368 together coordinate S-adenosyl-L-methionine. The active-site Nucleophile is the Cys-394.

Belongs to the class I-like SAM-binding methyltransferase superfamily. RNA M5U methyltransferase family. RlmD subfamily.

It catalyses the reaction uridine(1939) in 23S rRNA + S-adenosyl-L-methionine = 5-methyluridine(1939) in 23S rRNA + S-adenosyl-L-homocysteine + H(+). Functionally, catalyzes the formation of 5-methyl-uridine at position 1939 (m5U1939) in 23S rRNA. This is 23S rRNA (uracil(1939)-C(5))-methyltransferase RlmD from Haemophilus parainfluenzae (strain T3T1).